The primary structure comprises 258 residues: uncharacterized protein (258 aa).

Positions 3–58 (VAERQQKIVEIVNMRSSIRVSELSDIFSVTEETIRRDLEKLEKEHKLSRSHGGAVS) constitute an HTH deoR-type domain. Residues 20–39 (IRVSELSDIFSVTEETIRRD) constitute a DNA-binding region (H-T-H motif).

This is an uncharacterized protein from Bacillus subtilis (strain 168).